The sequence spans 609 residues: Chaperone protein DnaK (609 aa).

Residue Thr173 is modified to Phosphothreonine; by autocatalysis. Basic and acidic residues predominate over residues 525-542 (ENISDEDKKNAEEKKDAL). 2 disordered regions span residues 525 to 554 (ENISDEDKKNAEEKKDALKTALEGEDIDDI) and 574 to 609 (EQAQQAQQQGQEEQGSQDSTVEDADFKEVKDDEDKK). The span at 574 to 587 (EQAQQAQQQGQEEQ) shows a compositional bias: low complexity. The span at 597–609 (ADFKEVKDDEDKK) shows a compositional bias: basic and acidic residues.

This sequence belongs to the heat shock protein 70 family.

Functionally, acts as a chaperone. The chain is Chaperone protein DnaK from Staphylococcus epidermidis (strain ATCC 35984 / DSM 28319 / BCRC 17069 / CCUG 31568 / BM 3577 / RP62A).